A 514-amino-acid polypeptide reads, in one-letter code: Peptide chain release factor 3 (514 aa).

Residues 8–268 (KKRRTFAIIS…TFLEFAPEPH (261 aa)) form the tr-type G domain. GTP-binding positions include 17–24 (SHPDAGKT), 85–89 (DTPGH), and 139–142 (NKLD).

It belongs to the TRAFAC class translation factor GTPase superfamily. Classic translation factor GTPase family. PrfC subfamily.

It localises to the cytoplasm. Functionally, increases the formation of ribosomal termination complexes and stimulates activities of RF-1 and RF-2. It binds guanine nucleotides and has strong preference for UGA stop codons. It may interact directly with the ribosome. The stimulation of RF-1 and RF-2 is significantly reduced by GTP and GDP, but not by GMP. This Streptococcus pyogenes serotype M1 protein is Peptide chain release factor 3.